Reading from the N-terminus, the 539-residue chain is Chaperonin GroEL 1 (539 aa).

ATP-binding positions include 30–33, Lys51, 87–91, Gly415, 480–482, and Asp496; these read TLGP, DGTTT, and NAA.

The protein belongs to the chaperonin (HSP60) family. As to quaternary structure, forms a cylinder of 14 subunits composed of two heptameric rings stacked back-to-back. Interacts with the co-chaperonin GroES.

It is found in the cytoplasm. The catalysed reaction is ATP + H2O + a folded polypeptide = ADP + phosphate + an unfolded polypeptide.. Together with its co-chaperonin GroES, plays an essential role in assisting protein folding. The GroEL-GroES system forms a nano-cage that allows encapsulation of the non-native substrate proteins and provides a physical environment optimized to promote and accelerate protein folding. The sequence is that of Chaperonin GroEL 1 from Erythrobacter litoralis (strain HTCC2594).